Consider the following 186-residue polypeptide: RNA-free ribonuclease P (186 aa).

It belongs to the HARP family.

It catalyses the reaction Endonucleolytic cleavage of RNA, removing 5'-extranucleotides from tRNA precursor.. Its function is as follows. RNA-free RNase P that catalyzes the removal of the 5'-leader sequence from pre-tRNA to produce the mature 5'-terminus. This is RNA-free ribonuclease P from Hydrogenobaculum sp. (strain Y04AAS1).